Reading from the N-terminus, the 349-residue chain is NADH-quinone oxidoreductase subunit H (349 aa).

8 helical membrane-spanning segments follow: residues 20-42, 88-108, 123-143, 167-187, 202-222, 249-269, 284-304, and 325-345; these read WTLI…LTYF, GIFI…WAVV, LLYI…SGWA, MGFS…VEIV, FLSW…ISGV, GMAF…VSAL, FLPD…FLFL, and VFVP…MSPL.

It belongs to the complex I subunit 1 family. In terms of assembly, NDH-1 is composed of 14 different subunits. Subunits NuoA, H, J, K, L, M, N constitute the membrane sector of the complex.

It is found in the cell inner membrane. The catalysed reaction is a quinone + NADH + 5 H(+)(in) = a quinol + NAD(+) + 4 H(+)(out). Functionally, NDH-1 shuttles electrons from NADH, via FMN and iron-sulfur (Fe-S) centers, to quinones in the respiratory chain. The immediate electron acceptor for the enzyme in this species is believed to be ubiquinone. Couples the redox reaction to proton translocation (for every two electrons transferred, four hydrogen ions are translocated across the cytoplasmic membrane), and thus conserves the redox energy in a proton gradient. This subunit may bind ubiquinone. The polypeptide is NADH-quinone oxidoreductase subunit H (Dechloromonas aromatica (strain RCB)).